The chain runs to 82 residues: Sec-independent protein translocase protein TatA (82 aa).

The helical transmembrane segment at 1 to 21 (MHPPSITQLLIILLIIVLLFG) threads the bilayer. The tract at residues 42-82 (AVKEDEEDNQSEENTKSQIKQSESKNENVSKTHTDSQKQDT) is disordered. Residues 63-82 (SESKNENVSKTHTDSQKQDT) are compositionally biased toward basic and acidic residues.

Belongs to the TatA/E family. As to quaternary structure, the Tat system comprises two distinct complexes: a TatABC complex, containing multiple copies of TatA, TatB and TatC subunits, and a separate TatA complex, containing only TatA subunits. Substrates initially bind to the TatABC complex, which probably triggers association of the separate TatA complex to form the active translocon.

It localises to the cell inner membrane. In terms of biological role, part of the twin-arginine translocation (Tat) system that transports large folded proteins containing a characteristic twin-arginine motif in their signal peptide across membranes. TatA could form the protein-conducting channel of the Tat system. This chain is Sec-independent protein translocase protein TatA, found in Helicobacter hepaticus (strain ATCC 51449 / 3B1).